The chain runs to 104 residues: Fusaric acid biosynthesis protein 2 (104 aa).

It belongs to the YciI family.

The protein operates within mycotoxin biosynthesis. Its function is as follows. Part of the gene cluster that mediates the biosynthesis of fusaric acid, a mycotoxin with low to moderate toxicity to animals and humans, but with high phytotoxic properties. L-aspartate is suggested as fusaric acid amino acid precursor that is activated and further processed to O-acetyl-L-homoserine by cluster enzymes aspartate kinase FUB3 and homoserine O-acetyltransferase FUB5, as well as enzymes of the primary metabolism. The polyketide synthase (PKS) FUB1 generates the triketide trans-2-hexenal which is presumptively released by the hydrolase FUB4 and linked to the NRPS-bound amino acid precursor by NAD(P)-dependent dehydrogenase FUB6. FUB1, FUB4, and the non-canonical NRPS Fub8 may form an enzyme complex. Further processing of the NRPS-bound intermediate might be carried out by FUB6 and the sulfhydrylase FUB7, enabling a spontaneous electrocyclization to close the carbon backbone of fusaric acid. Dihydrofusaric acid is likely to be released via reduction by the thioester reductase (TR) domain of FUB8 whereupon the final oxidation to fusaric acid may (also) be performed by the FMN-dependent dehydrogenase FUB9. This is Fusaric acid biosynthesis protein 2 from Gibberella moniliformis (strain M3125 / FGSC 7600) (Maize ear and stalk rot fungus).